The following is a 536-amino-acid chain: Phosphoenolpyruvate carboxykinase (ATP) (536 aa).

Substrate is bound by residues Arg61, Tyr195, and Lys201. ATP is bound by residues Lys201, His220, and 236–244 (GLSGTGKTT). Positions 201 and 220 each coordinate Mn(2+). Mn(2+) is bound at residue Asp257. ATP is bound by residues Glu285, Arg322, and Thr447. Arg322 lines the substrate pocket.

Belongs to the phosphoenolpyruvate carboxykinase (ATP) family. Mn(2+) is required as a cofactor.

The protein localises to the cytoplasm. The enzyme catalyses oxaloacetate + ATP = phosphoenolpyruvate + ADP + CO2. The protein operates within carbohydrate biosynthesis; gluconeogenesis. Involved in the gluconeogenesis. Catalyzes the conversion of oxaloacetate (OAA) to phosphoenolpyruvate (PEP) through direct phosphoryl transfer between the nucleoside triphosphate and OAA. This is Phosphoenolpyruvate carboxykinase (ATP) from Brucella suis biovar 1 (strain 1330).